The following is a 118-amino-acid chain: Autophagy-related protein 8 (118 aa).

Glycine 116 carries Phosphatidylethanolamine amidated glycine lipidation. A propeptide spans 117 to 118 (SI) (removed in mature form).

Belongs to the ATG8 family. As to quaternary structure, conjugation to phosphatidylethanolamine (PE) leads to homodimerization. Interacts with ATG1, ATG3, ATG4, ATG7 and ATG12. In terms of processing, the C-terminal Ser-117 and Ile-118 residues of ATG8 are removed by ATG4 to expose Gly-116 at the C-terminus. This Gly-116 forms then a thioester bond with ATG7 (E1-like activating enzyme) before being transferred to ATG3 (the specific E2 conjugating enzyme), in order to be finally amidated with phosphatidylethanolamine. This lipid modification anchors ATG8 to membranes and can be reversed by ATG4, releasing soluble ATG8.

Its subcellular location is the cytoplasmic vesicle. It is found in the cvt vesicle membrane. The protein resides in the autophagosome membrane. It localises to the vacuole membrane. In terms of biological role, ubiquitin-like modifier involved in cytoplasm to vacuole transport (Cvt) vesicles and autophagosome formation. With ATG4, mediates the delivery of the vesicles and autophagosomes to the vacuole via the microtubule cytoskeleton. Required for selective autophagic degradation of the nucleus (nucleophagy) as well as for mitophagy which contributes to regulate mitochondrial quantity and quality by eliminating the mitochondria to a basal level to fulfill cellular energy requirements and preventing excess ROS production. Also participates in membrane fusion events that take place in the early secretory pathway. Also involved in endoplasmic reticulum-specific autophagic process and is essential for the survival of cells subjected to severe ER stress. The ATG8-PE conjugate mediates tethering between adjacent membranes and stimulates membrane hemifusion, leading to expansion of the autophagosomal membrane during autophagy. Moreover not only conjugation, but also subsequent ATG8-PE deconjugation is an important step required to facilitate multiple events during macroautophagy, and especially for efficient autophagosome biogenesis, the assembly of ATG9-containing tubulovesicular clusters into phagophores/autophagosomes, and for the disassembly of PAS-associated ATG components. Contributes to conidiation by regulating the conidial levels of the conidiation-related protein CP15 and mediates fungal oxidation resistance by controlling total superoxide dismutase (SOD) activity. This Beauveria bassiana (strain ARSEF 2860) (White muscardine disease fungus) protein is Autophagy-related protein 8.